Reading from the N-terminus, the 466-residue chain is Asparagine--tRNA ligase (466 aa).

Belongs to the class-II aminoacyl-tRNA synthetase family. As to quaternary structure, homodimer.

The protein localises to the cytoplasm. The catalysed reaction is tRNA(Asn) + L-asparagine + ATP = L-asparaginyl-tRNA(Asn) + AMP + diphosphate + H(+). The polypeptide is Asparagine--tRNA ligase (Xylella fastidiosa (strain 9a5c)).